An 89-amino-acid polypeptide reads, in one-letter code: Small ribosomal subunit protein uS15 (89 aa).

This sequence belongs to the universal ribosomal protein uS15 family. Part of the 30S ribosomal subunit. Forms a bridge to the 50S subunit in the 70S ribosome, contacting the 23S rRNA.

In terms of biological role, one of the primary rRNA binding proteins, it binds directly to 16S rRNA where it helps nucleate assembly of the platform of the 30S subunit by binding and bridging several RNA helices of the 16S rRNA. Forms an intersubunit bridge (bridge B4) with the 23S rRNA of the 50S subunit in the ribosome. The polypeptide is Small ribosomal subunit protein uS15 (Cupriavidus necator (strain ATCC 17699 / DSM 428 / KCTC 22496 / NCIMB 10442 / H16 / Stanier 337) (Ralstonia eutropha)).